Reading from the N-terminus, the 617-residue chain is Protein fem-1 homolog C (617 aa).

ANK repeat units lie at residues 2-31, 40-70, 82-111, 115-144, 148-177, 181-210, and 213-242; these read DLKT…KDDV, NGAT…SVEI, EGAP…SVNN, TNST…DLEV, HGHT…DVNR, KGNT…RMEK, and YGMT…TSKN. TPR repeat units lie at residues 245–279 and 338–371; these read INAL…RHSD and SYYI…QQNN. ANK repeat units follow at residues 481-523 and 527-556; these read NNFS…DVNV and EQNS…HFDS.

This sequence belongs to the fem-1 family. In terms of assembly, component of a CRL2 E3 ubiquitin-protein ligase complex, also named ECS (Elongin BC-CUL2/5-SOCS-box protein) complex.

It participates in protein modification; protein ubiquitination. Functionally, substrate-recognition component of a Cul2-RING (CRL2) E3 ubiquitin-protein ligase complex of the DesCEND (destruction via C-end degrons) pathway, which recognizes a C-degron located at the extreme C terminus of target proteins, leading to their ubiquitination and degradation. The C-degron recognized by the DesCEND pathway is usually a motif of less than ten residues and can be present in full-length proteins, truncated proteins or proteolytically cleaved forms. The CRL2(FEM1C) complex specifically recognizes proteins with an arginine at the C-terminus: recognizes and binds proteins ending with -Lys/Arg-Xaa-Arg and -Lys/Arg-Xaa-Xaa-Arg C-degrons, leading to their ubiquitination and degradation. The polypeptide is Protein fem-1 homolog C (Xenopus laevis (African clawed frog)).